We begin with the raw amino-acid sequence, 194 residues long: Thymidine kinase (194 aa).

Residues 15–22 and 88–91 each bind ATP; these read GCMFSGKT and DELH. Glutamate 89 serves as the catalytic Proton acceptor. 4 residues coordinate Zn(2+): cysteine 148, cysteine 151, cysteine 186, and cysteine 189.

This sequence belongs to the thymidine kinase family. As to quaternary structure, homotetramer.

It localises to the cytoplasm. The catalysed reaction is thymidine + ATP = dTMP + ADP + H(+). The polypeptide is Thymidine kinase (Roseiflexus castenholzii (strain DSM 13941 / HLO8)).